The primary structure comprises 330 residues: Lipoyl synthase (330 aa).

Cys-77, Cys-82, Cys-88, Cys-103, Cys-107, Cys-110, and Ser-317 together coordinate [4Fe-4S] cluster. The Radical SAM core domain occupies 89 to 306 (FNHGTATFMI…RSEAERMGFE (218 aa)).

The protein belongs to the radical SAM superfamily. Lipoyl synthase family. [4Fe-4S] cluster is required as a cofactor.

It localises to the cytoplasm. It catalyses the reaction [[Fe-S] cluster scaffold protein carrying a second [4Fe-4S](2+) cluster] + N(6)-octanoyl-L-lysyl-[protein] + 2 oxidized [2Fe-2S]-[ferredoxin] + 2 S-adenosyl-L-methionine + 4 H(+) = [[Fe-S] cluster scaffold protein] + N(6)-[(R)-dihydrolipoyl]-L-lysyl-[protein] + 4 Fe(3+) + 2 hydrogen sulfide + 2 5'-deoxyadenosine + 2 L-methionine + 2 reduced [2Fe-2S]-[ferredoxin]. It participates in protein modification; protein lipoylation via endogenous pathway; protein N(6)-(lipoyl)lysine from octanoyl-[acyl-carrier-protein]: step 2/2. Functionally, catalyzes the radical-mediated insertion of two sulfur atoms into the C-6 and C-8 positions of the octanoyl moiety bound to the lipoyl domains of lipoate-dependent enzymes, thereby converting the octanoylated domains into lipoylated derivatives. This chain is Lipoyl synthase, found in Actinobacillus pleuropneumoniae serotype 3 (strain JL03).